Here is a 165-residue protein sequence, read N- to C-terminus: Ribosome maturation factor RimM (165 aa).

The PRC barrel domain occupies 94–163; sequence EDEFYIADLN…KDYVTLNYQR (70 aa).

The protein belongs to the RimM family. In terms of assembly, binds ribosomal protein uS19.

Its subcellular location is the cytoplasm. An accessory protein needed during the final step in the assembly of 30S ribosomal subunit, possibly for assembly of the head region. Essential for efficient processing of 16S rRNA. May be needed both before and after RbfA during the maturation of 16S rRNA. It has affinity for free ribosomal 30S subunits but not for 70S ribosomes. The chain is Ribosome maturation factor RimM from Rickettsia akari (strain Hartford).